A 117-amino-acid polypeptide reads, in one-letter code: Nitrogen regulatory protein GlnK1 (117 aa).

ADP-binding positions include Thr32, 40 to 42, and 92 to 95; these read GAQ and GSGK. Residues Thr32, 40–42, and 92–95 contribute to the ATP site; these read GAQ and GSGK.

The protein belongs to the P(II) protein family. Homotrimer. Interacts and forms stable complexes with the glutamine synthetase GlnA1.

It is found in the cytoplasm. Its activity is regulated as follows. Inhibitory effects on GlnA1 are abolished in the presence of the effector 2-oxoglutarate. In terms of biological role, involved in the regulation of nitrogen metabolism. Regulates the activity of its targets by protein-protein interaction in response to the nitrogen status of the cell. Allows finetuning control of the glutamine synthetase GlnA1 under changing nitrogen availabilities via direct protein interaction. The sequence is that of Nitrogen regulatory protein GlnK1 from Methanosarcina mazei (strain ATCC BAA-159 / DSM 3647 / Goe1 / Go1 / JCM 11833 / OCM 88) (Methanosarcina frisia).